Here is a 142-residue protein sequence, read N- to C-terminus: Peptide methionine sulfoxide reductase MsrB (142 aa).

The 123-residue stretch at 10–132 (EEEWKKVLTP…NSVSLNFKTE (123 aa)) folds into the MsrB domain. The Zn(2+) site is built by C49, C52, C98, and C101. C121 serves as the catalytic Nucleophile.

Belongs to the MsrB Met sulfoxide reductase family. It depends on Zn(2+) as a cofactor.

The catalysed reaction is L-methionyl-[protein] + [thioredoxin]-disulfide + H2O = L-methionyl-(R)-S-oxide-[protein] + [thioredoxin]-dithiol. The sequence is that of Peptide methionine sulfoxide reductase MsrB from Methanosarcina barkeri (strain Fusaro / DSM 804).